The following is a 187-amino-acid chain: Glutathione-dependent formaldehyde-activating enzyme (187 aa).

Positions 20 to 167 (FAGGTLVCKC…LKELGLEPYD (148 aa)) constitute a CENP-V/GFA domain. Zn(2+) contacts are provided by Cys-27, Cys-29, Cys-48, Cys-50, Cys-53, Cys-95, and Cys-98.

This sequence belongs to the Gfa family. Zn(2+) serves as cofactor.

The catalysed reaction is S-(hydroxymethyl)glutathione = glutathione + formaldehyde. It functions in the pathway one-carbon metabolism; formaldehyde degradation; formate from formaldehyde (glutathione route): step 1/3. Functionally, catalyzes the condensation of formaldehyde and glutathione to S-hydroxymethylglutathione. In Bradyrhizobium sp. (strain BTAi1 / ATCC BAA-1182), this protein is Glutathione-dependent formaldehyde-activating enzyme.